The primary structure comprises 163 residues: Putative MucR family transcriptional regulatory protein RA0938 (163 aa).

The protein belongs to the ros/MucR family.

In Rhizobium meliloti (strain 1021) (Ensifer meliloti), this protein is Putative MucR family transcriptional regulatory protein RA0938.